A 481-amino-acid polypeptide reads, in one-letter code: UDP-N-acetylmuramoyl-L-alanyl-D-glutamate--L-lysine ligase (481 aa).

Serine 42 provides a ligand contact to UDP-N-acetyl-alpha-D-muramoyl-L-alanyl-D-glutamate. 118 to 124 lines the ATP pocket; sequence GTKGKTT. UDP-N-acetyl-alpha-D-muramoyl-L-alanyl-D-glutamate is bound by residues glutamine 158, 160-161, serine 187, and arginine 195; that span reads TT. Lysine 229 is modified (N6-carboxylysine). The short motif at 404–407 is the L-lysine recognition motif element; the sequence is DDPN.

Belongs to the MurCDEF family. MurE subfamily. Post-translationally, carboxylation is probably crucial for Mg(2+) binding and, consequently, for the gamma-phosphate positioning of ATP.

The protein localises to the cytoplasm. It carries out the reaction UDP-N-acetyl-alpha-D-muramoyl-L-alanyl-D-glutamate + L-lysine + ATP = UDP-N-acetyl-alpha-D-muramoyl-L-alanyl-gamma-D-glutamyl-L-lysine + ADP + phosphate + H(+). Its pathway is cell wall biogenesis; peptidoglycan biosynthesis. Its function is as follows. Catalyzes the addition of L-lysine to the nucleotide precursor UDP-N-acetylmuramoyl-L-alanyl-D-glutamate (UMAG) in the biosynthesis of bacterial cell-wall peptidoglycan. The polypeptide is UDP-N-acetylmuramoyl-L-alanyl-D-glutamate--L-lysine ligase (Streptococcus pyogenes serotype M4 (strain MGAS10750)).